Consider the following 109-residue polypeptide: Matrix protein 2 (109 aa).

Residues 1 to 4 (MLEP) are Virion surface-facing. The chain crosses the membrane as a helical; Signal-anchor for type III membrane protein span at residues 5-27 (FQILSICSFILSALHFMAWTIGH). The Intravirion portion of the chain corresponds to 28-109 (LNQIKRGVNL…ETVLEVEELQ (82 aa)). A coiled-coil region spans residues 58–83 (HSYQKEIQAKETMKEVLSDNMEILSD).

In terms of assembly, homotetramer. In terms of processing, phosphorylated by host.

It localises to the virion membrane. It is found in the host cell membrane. Forms presumably a highly low-pH gated proton-selective channel. Trp-23 may function as a minimalistic gate that opens and closes the pore. When the environmental pH is lower than a threshold, the BM2 channel would be activated and selectively transport protons across the membrane from the extracellular side to the cytoplasmic side. Crucial for the uncoating process. When the virion is internalized into the endosome, the channel acidifies the virion's interior, promoting the dissociation of matrix protein 1 (M1) from the ribonucleoprotein (RNP) thus allowing the transport of the RNP from the virion into the cell's nucleus. Also plays a role in viral protein secretory pathway. Elevates the intravesicular pH of normally acidic compartments, such as trans-Golgi network, preventing newly formed hemagglutinin from premature switching to the fusion-active conformation. Plays a crucial role in virion assembly. Expressed in the late phase of the infection. This chain is Matrix protein 2 (M), found in Influenza B virus (strain B/Ann Arbor/1/1966 [cold-adapted]).